The primary structure comprises 360 residues: 3-dehydroquinate synthase (360 aa).

Residues 72-77, 106-110, 130-131, Lys143, Lys152, and 170-173 each bind NAD(+); these read DGEEFK, GVVGD, TT, and TLTT. 3 residues coordinate Zn(2+): Glu185, His248, and His265.

It belongs to the sugar phosphate cyclases superfamily. Dehydroquinate synthase family. Co(2+) serves as cofactor. Zn(2+) is required as a cofactor. It depends on NAD(+) as a cofactor.

Its subcellular location is the cytoplasm. The catalysed reaction is 7-phospho-2-dehydro-3-deoxy-D-arabino-heptonate = 3-dehydroquinate + phosphate. It participates in metabolic intermediate biosynthesis; chorismate biosynthesis; chorismate from D-erythrose 4-phosphate and phosphoenolpyruvate: step 2/7. In terms of biological role, catalyzes the conversion of 3-deoxy-D-arabino-heptulosonate 7-phosphate (DAHP) to dehydroquinate (DHQ). This chain is 3-dehydroquinate synthase, found in Geobacter metallireducens (strain ATCC 53774 / DSM 7210 / GS-15).